A 220-amino-acid polypeptide reads, in one-letter code: Phosphoserine phosphatase (220 aa).

D11 functions as the Nucleophile in the catalytic mechanism. Residues D11 and D13 each contribute to the Mg(2+) site. D13 serves as the catalytic Proton donor. Residues E20, R56, 99–100 (SG), and K144 contribute to the substrate site. Residue D167 coordinates Mg(2+). Substrate is bound at residue N170.

This sequence belongs to the HAD-like hydrolase superfamily. SerB family. The cofactor is Mg(2+).

It catalyses the reaction O-phospho-L-serine + H2O = L-serine + phosphate. It carries out the reaction O-phospho-D-serine + H2O = D-serine + phosphate. The protein operates within amino-acid biosynthesis; L-serine biosynthesis; L-serine from 3-phospho-D-glycerate: step 3/3. The polypeptide is Phosphoserine phosphatase (Idiomarina loihiensis (strain ATCC BAA-735 / DSM 15497 / L2-TR)).